The chain runs to 582 residues: Arginine--tRNA ligase (582 aa).

The 'HIGH' region signature appears at 136–146 (ANPTGPMHMGH).

Belongs to the class-I aminoacyl-tRNA synthetase family. Monomer.

The protein localises to the cytoplasm. The enzyme catalyses tRNA(Arg) + L-arginine + ATP = L-arginyl-tRNA(Arg) + AMP + diphosphate. This chain is Arginine--tRNA ligase, found in Novosphingobium aromaticivorans (strain ATCC 700278 / DSM 12444 / CCUG 56034 / CIP 105152 / NBRC 16084 / F199).